The primary structure comprises 103 residues: MGGEDMAKKKAPSAKEGEKQQGFKEIIPEVTEKLVEQARKEVARERWVTPHKLAQKMGVKVSIARRVLRILEEEGVLVLFTRNRRSPLYLPKKKVPTAPPRGL.

The segment at 1–23 is disordered; sequence MGGEDMAKKKAPSAKEGEKQQGF.

This sequence belongs to the eukaryotic ribosomal protein eS25 family.

This is Small ribosomal subunit protein eS25 (rps25e) from Aeropyrum pernix (strain ATCC 700893 / DSM 11879 / JCM 9820 / NBRC 100138 / K1).